The primary structure comprises 319 residues: MNGEIRLIPYVTNEQIMDVNELPEGIKVIKAPEMWAKGVKGKNIKVAVLDTGCDTSHPDLKNQIIGGKNFTDDDGGKEDAISDYNGHGTHVAGTIAANDSNGGIAGVAPEASLLIVKVLGGENGSGQYEWIINGINYAVEQKVDIISMSLGGPSDVPELKEAVKNAVKNGVLVVCAAGNEGDGDERTEELSYPAAYNEVIAVGSVSVARELSEFSNANKEIDLVAPGENILSTLPNKKYGKLTGTSMAAPHVSGALALIKSYEEESFQRKLSESEVFAQLIRRTLPLDIAKTLAGNGFLYLTAPDELAEKAEQSHLLTL.

A propeptide spanning residues 1-17 is cleaved from the precursor; it reads MNGEIRLIPYVTNEQIM. The 285-residue stretch at 23–307 folds into the Peptidase S8 domain; sequence PEGIKVIKAP…FLYLTAPDEL (285 aa). Catalysis depends on charge relay system residues aspartate 50, histidine 87, and serine 246.

The protein belongs to the peptidase S8 family. Homodimer.

It localises to the cytoplasm. Its function is as follows. Major intracellular protease produced by Bacillus subtilis. The chain is Major intracellular serine protease (isp) from Bacillus subtilis (strain 168).